The chain runs to 901 residues: Sperm-associated antigen 1 (901 aa).

3 TPR repeats span residues Ala-213–Ala-246, Ile-247–Asn-279, and Val-280–Asn-313. Positions Glu-322–Gly-437 are disordered. Ser-351 and Ser-359 each carry phosphoserine. TPR repeat units lie at residues Pro-430 to Gly-464, Ser-472 to Ser-505, Lys-507 to Ile-539, Phe-606 to Ala-639, and Cys-640 to Asn-673. Residues Gly-694–Ser-776 are disordered. Position 703 is a phosphoserine (Ser-703). The segment covering Glu-708–Asn-717 has biased composition (basic and acidic residues). Phosphoserine is present on residues Ser-739 and Ser-740. Pro-756–Asp-763 is a GTP binding site. Ser-766 is modified (phosphoserine).

As to expression, detected in cerebellum, tongue, esophagus, forestomach, sperm and testis.

Its subcellular location is the cytoplasm. The protein localises to the dynein axonemal particle. May play a role in the cytoplasmic assembly of the ciliary dynein arms. May play a role in fertilization. Binds GTP and has GTPase activity. This chain is Sperm-associated antigen 1 (Spag1), found in Mus musculus (Mouse).